Reading from the N-terminus, the 179-residue chain is Adenine phosphoribosyltransferase (179 aa).

It belongs to the purine/pyrimidine phosphoribosyltransferase family. As to quaternary structure, homodimer.

The protein resides in the cytoplasm. The enzyme catalyses AMP + diphosphate = 5-phospho-alpha-D-ribose 1-diphosphate + adenine. The protein operates within purine metabolism; AMP biosynthesis via salvage pathway; AMP from adenine: step 1/1. Catalyzes a salvage reaction resulting in the formation of AMP, that is energically less costly than de novo synthesis. The chain is Adenine phosphoribosyltransferase from Bradyrhizobium sp. (strain ORS 278).